Consider the following 90-residue polypeptide: Accessory gland-specific peptide 26Ab (90 aa).

Positions 1-21 (MNYFAVICIFSCICLWQFSDA) are cleaved as a signal peptide.

As to expression, main cells and secondary cells of the accessory glands of 1 day old virgin males (at protein level). In 5 day old virgin males, only detected in the secondary cells (at protein level). Reappears in the main cells after mating (at protein level). First detected in adult males 3-4 hr after eclosion, levels increase reaching a peak at day 3-5 which is maintained until at least day 10 of adulthood (at protein level). In unmated male adults, levels are maintained for the first 6 days of adulthood and then gradually decrease for at least the next 8 days. No expression in females.

Its subcellular location is the secreted. It is found in the extracellular space. The protein localises to the cytoplasm. In terms of biological role, this protein is transferred from male to female during mating and may affect egglaying and behavior after mating. This chain is Accessory gland-specific peptide 26Ab, found in Drosophila melanogaster (Fruit fly).